The sequence spans 629 residues: MAVPPGHGPFSGFPGPQEHTQVLPDVRLLPRRLPLAFRDAASAPLRKLSVDLIKTYKHINEVYYAKKKRRAQQAPPQDSSTKKEKKVLNHGYDDDNHDYIVRSGERWLERYEIDSLIGKGSFGQVVKAYDHQTQELVAIKIIKNKKAFLNQAQIELRLLELMNQHDTEMKYYIVHLKRHFMFRNHLCLVFELLSYNLYDLLRNTHFRGVSLNLTRKLAQQLCTALLFLATPELSIIHCDLKPENILLCNPKRSAIKIVDFGSSCQLGQRIYQYIQSRFYRSPEVLLGTPYDLAIDMWSLGCILVEMHTGEPLFSGSNEVDQMSRIVEVLGIPPAPMLEQAPKARKYFERLPGGGWTLRRTKELRKDYQGPGTRRLQEVLGVQTGGPGGRRAGEPGHSPADYLRFQDLVLRMLEYEPAARISPLGALQHGFFRRTADEATNTGPAGSSASTSPAPLDTCPSSSTASSISSSGGSSGSSNDNRAYRYSNRYCGGPGPPITDCEMNSPQVLPSQPLRPWAGGDVPHKTHQAPISASTLPGTGAQLPPLPRCLGRPPSPTSPPPPELMDVSLVGSPPDCSPPPPAPAPQHPAASALRTRMTGGRPPLPPPDDPATLGPRLGLHGVPQSTAASS.

Residue Tyr63 is modified to Phosphotyrosine. The tract at residues Lys67–Lys86 is disordered. The Bipartite nuclear localization signal motif lies at Arg69–Lys86. A phosphotyrosine mark is found at Tyr92 and Tyr111. A Protein kinase domain is found at Tyr111–Phe431. Ile117–Val125 is a binding site for ATP. Tyr129 is modified (phosphotyrosine). Lys140 is a binding site for ATP. Tyr171 bears the Phosphotyrosine mark. Phe190–Leu193 is an ATP binding site. Asp239 functions as the Proton acceptor in the catalytic mechanism. At Ser262 the chain carries Phosphoserine. The residue at position 271 (Tyr271) is a Phosphotyrosine; by autocatalysis. Tyr273 is subject to Phosphotyrosine. The tract at residues Gly380 to Ala399 is disordered. Tyr401 carries the post-translational modification Phosphotyrosine. Disordered stretches follow at residues Asp436–Asn480 and Pro496–Ser629. Low complexity predominate over residues Ala438–Ser477. Residues Asn480 to Asp520 are interaction with RANBP9. Composition is skewed to pro residues over residues Pro552–Glu562 and Asp574–Gln585. Residue Ser624 is modified to Phosphoserine.

Belongs to the protein kinase superfamily. CMGC Ser/Thr protein kinase family. MNB/DYRK subfamily. In terms of assembly, dimer. Interacts with DCOHM, MAP2K3/MKK3, RANBP9 and TCF1/HNF1A. Part of a complex consisting of RANBP9, RAN, DYRK1B and COPS5. Interacts with DCAF7. Interacts with RNF169. In terms of processing, phosphorylated by MAP kinase. Tyrosine phosphorylation may be required for dimerization. Isoform 1 and isoform 2 are broadly expressed. Isoform 3 seems specific for skeletal muscle (at protein level).

It localises to the nucleus. The protein localises to the nucleolus. The protein resides in the chromosome. It catalyses the reaction L-seryl-[protein] + ATP = O-phospho-L-seryl-[protein] + ADP + H(+). The catalysed reaction is L-threonyl-[protein] + ATP = O-phospho-L-threonyl-[protein] + ADP + H(+). The enzyme catalyses L-tyrosyl-[protein] + ATP = O-phospho-L-tyrosyl-[protein] + ADP + H(+). Inhibited by RANBP9. Functionally, dual-specificity kinase which possesses both serine/threonine and tyrosine kinase activities. Plays an essential role in ribosomal DNA (rDNA) double-strand break repair and rDNA copy number maintenance. During DNA damage, mediates transcription silencing in part via phosphorylating and enforcing DSB accumulation of the histone methyltransferase EHMT2. Enhances the transcriptional activity of TCF1/HNF1A and FOXO1. Inhibits epithelial cell migration. Mediates colon carcinoma cell survival in mitogen-poor environments. Inhibits the SHH and WNT1 pathways, thereby enhancing adipogenesis. In addition, promotes expression of the gluconeogenic enzyme glucose-6-phosphatase catalytic subunit 1 (G6PC1). The sequence is that of Dual specificity tyrosine-phosphorylation-regulated kinase 1B (Dyrk1b) from Mus musculus (Mouse).